Consider the following 661-residue polypeptide: UvrABC system protein B (661 aa).

Residues 24–209 form the Helicase ATP-binding domain; the sequence is NGLNKGYRFQ…IFPSYQDEGI (186 aa). Residue 37-44 participates in ATP binding; that stretch reads GVTGSGKT. Positions 90–113 match the Beta-hairpin motif; the sequence is YYDYYQPEAYVPTKDLYIEKSADI. The region spanning 430–594 is the Helicase C-terminal domain; that stretch reads DLVNEIVQVK…IIKPLMEDIF (165 aa). Residues 622-657 enclose the UVR domain; that stretch reads EEYAALLEEEMYKAASELRYEDAARLRDELFKIKEE.

The protein belongs to the UvrB family. As to quaternary structure, forms a heterotetramer with UvrA during the search for lesions. Interacts with UvrC in an incision complex.

It is found in the cytoplasm. Its function is as follows. The UvrABC repair system catalyzes the recognition and processing of DNA lesions. A damage recognition complex composed of 2 UvrA and 2 UvrB subunits scans DNA for abnormalities. Upon binding of the UvrA(2)B(2) complex to a putative damaged site, the DNA wraps around one UvrB monomer. DNA wrap is dependent on ATP binding by UvrB and probably causes local melting of the DNA helix, facilitating insertion of UvrB beta-hairpin between the DNA strands. Then UvrB probes one DNA strand for the presence of a lesion. If a lesion is found the UvrA subunits dissociate and the UvrB-DNA preincision complex is formed. This complex is subsequently bound by UvrC and the second UvrB is released. If no lesion is found, the DNA wraps around the other UvrB subunit that will check the other stand for damage. The chain is UvrABC system protein B from Fervidobacterium nodosum (strain ATCC 35602 / DSM 5306 / Rt17-B1).